The chain runs to 254 residues: D-aminoacyl-tRNA deacylase (254 aa).

Positions 61-82 (KPTLTVHTPGNLTDDNSHGGNP) are disordered. Polar residues predominate over residues 65 to 74 (TVHTPGNLTD).

This sequence belongs to the DtdA deacylase family. As to quaternary structure, monomer. Requires Zn(2+) as cofactor.

It carries out the reaction a D-aminoacyl-tRNA + H2O = a tRNA + a D-alpha-amino acid + H(+). The enzyme catalyses glycyl-tRNA(Ala) + H2O = tRNA(Ala) + glycine + H(+). Its function is as follows. D-aminoacyl-tRNA deacylase with broad substrate specificity. By recycling D-aminoacyl-tRNA to D-amino acids and free tRNA molecules, this enzyme counteracts the toxicity associated with the formation of D-aminoacyl-tRNA entities in vivo. The sequence is that of D-aminoacyl-tRNA deacylase from Methanococcus maripaludis (strain DSM 14266 / JCM 13030 / NBRC 101832 / S2 / LL).